The sequence spans 124 residues: Small ribosomal subunit protein eS6 (124 aa).

Belongs to the eukaryotic ribosomal protein eS6 family.

This Thermoplasma acidophilum (strain ATCC 25905 / DSM 1728 / JCM 9062 / NBRC 15155 / AMRC-C165) protein is Small ribosomal subunit protein eS6.